A 517-amino-acid polypeptide reads, in one-letter code: Crotonobetaine/carnitine--CoA ligase (517 aa).

This sequence belongs to the ATP-dependent AMP-binding enzyme family.

The enzyme catalyses 4-(trimethylamino)butanoate + ATP + CoA = 4-(trimethylamino)butanoyl-CoA + AMP + diphosphate. It catalyses the reaction crotonobetaine + ATP + CoA = crotonobetainyl-CoA + AMP + diphosphate. It carries out the reaction (R)-carnitine + ATP + CoA = (R)-carnitinyl-CoA + AMP + diphosphate. It functions in the pathway amine and polyamine metabolism; carnitine metabolism. Its function is as follows. Catalyzes the transfer of CoA to carnitine, generating the initial carnitinyl-CoA needed for the CaiB reaction cycle. Also has activity toward crotonobetaine and gamma-butyrobetaine. The sequence is that of Crotonobetaine/carnitine--CoA ligase from Escherichia coli O7:K1 (strain IAI39 / ExPEC).